A 77-amino-acid polypeptide reads, in one-letter code: uncharacterized protein (77 aa).

This is an uncharacterized protein from Acidianus ambivalens (Desulfurolobus ambivalens).